The following is an 88-amino-acid chain: Phosphocarrier protein HPr (88 aa).

In terms of domain architecture, HPr spans 1–88; the sequence is MEQQSYTIID…DVLSKEGLTE (88 aa). Residue H15 is the Pros-phosphohistidine intermediate of the active site. Phosphoserine; by HPrK/P is present on S46.

This sequence belongs to the HPr family.

The protein localises to the cytoplasm. With respect to regulation, phosphorylation on Ser-46 inhibits the phosphoryl transfer from enzyme I to HPr. General (non sugar-specific) component of the phosphoenolpyruvate-dependent sugar phosphotransferase system (sugar PTS). This major carbohydrate active-transport system catalyzes the phosphorylation of incoming sugar substrates concomitantly with their translocation across the cell membrane. The phosphoryl group from phosphoenolpyruvate (PEP) is transferred to the phosphoryl carrier protein HPr by enzyme I. Phospho-HPr then transfers it to the PTS EIIA domain. Its function is as follows. P-Ser-HPr interacts with the catabolite control protein A (CcpA), forming a complex that binds to DNA at the catabolite response elements cre, operator sites preceding a large number of catabolite-regulated genes. Thus, P-Ser-HPr is a corepressor in carbon catabolite repression (CCR), a mechanism that allows bacteria to coordinate and optimize the utilization of available carbon sources. P-Ser-HPr also plays a role in inducer exclusion, in which it probably interacts with several non-PTS permeases and inhibits their transport activity. The protein is Phosphocarrier protein HPr (ptsH) of Staphylococcus carnosus.